The primary structure comprises 657 residues: Serine/threonine kinase NLK (657 aa).

In terms of domain architecture, Protein kinase spans 208–554 (SQPDRPIGYG…VEEALSHPYL (347 aa)). ATP contacts are provided by residues 214–222 (IGYGAFGVV) and K237. Catalysis depends on D391, which acts as the Proton acceptor.

It belongs to the protein kinase superfamily. Ser/Thr protein kinase family. In terms of assembly, component of the beta-catenin-lit-1 complex (also called the lit-1/wrm-1 complex or the wrm-1/lit-1 kinase complex) at least composed of lit-1 and wrm-1. Interacts with wrm-1 (via N-terminus); the interaction is direct and activates lit-1 kinase activity which leads to the phosphorylation of pop-1. This promotes pop-1 interaction with par-5 and translocation of pop-1 from the nucleus to the cytoplasm. Interacts with pop-1 (when phosphorylated on 'Ser-125'); the interaction is dependent on the beta-catenin-lit-1 complex. Requires Mg(2+) as cofactor.

It is found in the cytoplasm. It localises to the cell cortex. Its subcellular location is the nucleus. The catalysed reaction is L-seryl-[protein] + ATP = O-phospho-L-seryl-[protein] + ADP + H(+). It carries out the reaction L-threonyl-[protein] + ATP = O-phospho-L-threonyl-[protein] + ADP + H(+). Functionally, has a role in the Wnt signaling pathway controlling the asymmetry of cell divisions during embryogenesis. Operates in the AB and EMS cell lineages influencing cell specification. Required for body wall muscle development, endoderm development, pop-1 asymmetry and T-cell division asymmetry. Component of the beta-catenin-lit-1 complex which promotes the phosphorylation, down-regulation and subcellular relocation of pop-1. Regulates plp-1 nuclear localization in embryos. Plays a role in male tail tip morphogenesis. This is Serine/threonine kinase NLK from Caenorhabditis briggsae.